The sequence spans 77 residues: Protein RADIALIS-like 4 (77 aa).

The SANT domain occupies 6–61 (MSTSSWTAREDKQFEMALAKFDKDTPDRWQKIARAVGGKSTEEVKRHYELLLRDVN).

Expressed just outside the vascular bundles in the rosette stem and the leaf traces. Not detected in floral primordia.

It is found in the nucleus. Functionally, probable transcription factor. The polypeptide is Protein RADIALIS-like 4 (RL4) (Arabidopsis thaliana (Mouse-ear cress)).